We begin with the raw amino-acid sequence, 385 residues long: Spermidine/putrescine import ATP-binding protein PotA (385 aa).

The region spanning 27–257 is the ABC transporter domain; sequence ASFRAVSKHY…PANLFVAQFA (231 aa). 59-66 serves as a coordination point for ATP; that stretch reads GPSGCGKT.

The protein belongs to the ABC transporter superfamily. Spermidine/putrescine importer (TC 3.A.1.11.1) family. In terms of assembly, the complex is composed of two ATP-binding proteins (PotA), two transmembrane proteins (PotB and PotC) and a solute-binding protein (PotD).

The protein resides in the cell inner membrane. The catalysed reaction is ATP + H2O + polyamine-[polyamine-binding protein]Side 1 = ADP + phosphate + polyamineSide 2 + [polyamine-binding protein]Side 1.. Part of the ABC transporter complex PotABCD involved in spermidine/putrescine import. Responsible for energy coupling to the transport system. This is Spermidine/putrescine import ATP-binding protein PotA from Methylococcus capsulatus (strain ATCC 33009 / NCIMB 11132 / Bath).